A 6930-amino-acid chain; its full sequence is Replicase polyprotein 1ab (6930 aa).

The CoV Nsp1 globular domain maps to 10-131 (LKSMVVTTLK…DIDIQIRKYG (122 aa)). The BetaCoV Nsp1 C-terminal domain maps to 149-175 (DPGPDVGPYLDFPDNCCPTKPKAKRGG). Residues 177 to 431 (VYLSDQYGFD…ELVEYLIEGI (255 aa)) enclose the CoV Nsp2 N-terminal domain. 4 residues coordinate Zn(2+): C312, C315, C331, and C333. Positions 312-333 (CSYCDYYGWTPLKDIGTVNCLC) are C4. One can recognise a CoV Nsp2 middle domain in the interval 432-644 (RVDADTLDNP…CDLLTTIMSK (213 aa)). The CoV Nsp2 C-terminal domain maps to 646 to 772 (LTSVKWAGCK…LGKAFRLRGG (127 aa)). In terms of domain architecture, Ubiquitin-like 1 spans 775–885 (SKVTFGDEEV…MYFSLEDAVP (111 aa)). One can recognise a Macro 1 domain in the interval 930 to 1097 (MTTPCGYTKI…LYERALATSF (168 aa)). Residues 1188–1207 (KRPPPIVPQQTVEQQPQEIS) form a disordered region. The span at 1195–1206 (PQQTVEQQPQEI) shows a compositional bias: low complexity. The region spanning 1216–1340 (LVDVVSMSFS…LYRAYFNGVF (125 aa)) is the Macro 2 domain. The DPUP domain maps to 1345 to 1417 (TAVQDFVVDI…VSKARAYLET (73 aa)). A Ubiquitin-like 2 domain is found at 1423 to 1478 (EPLIKVLTTVDGINYSTVLVSTAQSYRAQIGTVFCDGHDWSNKNPMPTDEGTHLYK). One can recognise a Peptidase C16 domain in the interval 1492–1757 (EYYGVDDSNI…RTTIDPDFSK (266 aa)). The For PL-PRO activity role is filled by C1533. 4 residues coordinate Zn(2+): C1610, C1613, C1645, and C1647. Residues 1610–1647 (CEHCGVSQMVFTGTDACTFYGSVVLDDLYAPVSVVCQC) form a C4-type zinc finger. Catalysis depends on for PL-PRO activity residues H1694 and D1708. The 101-residue stretch at 1770 to 1870 (PIEVVAAPKL…PLLSTVVVNT (101 aa)) folds into the Nucleic acid-binding domain. The 130-residue stretch at 1883–2012 (PVNNETSEEP…KTADFVRSTN (130 aa)) folds into the G2M domain. The next 3 helical transmembrane spans lie at 2015–2035 (SKCV…WLLV), 2040–2060 (IVKV…TCVL), and 2081–2101 (YMLY…WLSE). The segment at 2015 to 2238 (SKCVGLLCLF…IVIAFLWLCY (224 aa)) is HD1. Residues 2105–2162 (PSLVTRFKYFLGIVMPCDYVLVNETGTGWLHHLCMAGMDSLDYPALRMQQHRYGSPYN) form the 3Ecto domain. C2121 and C2138 are oxidised to a cystine. 3 helical membrane passes run 2162-2182 (NYTY…YTPA), 2183-2203 (LPIV…PIPL), and 2218-2238 (LVPF…WLCY). Positions 2239–2329 (KGFLHVRYGC…QFKRPIIHTD (91 aa)) are Y1. The 372-residue stretch at 2239–2610 (KGFLHVRYGC…MVTPFKIIGG (372 aa)) folds into the CoV Nsp3 Y domain. Zn(2+) is bound by residues H2243, C2248, C2253, C2256, C2289, H2292, C2296, and C2299. Residues 2243–2256 (HVRYGCNNVACLMC) form a ZF1 region. The ZF2 stretch occupies residues 2289 to 2299 (CTKHNWNCVSC). The tract at residues 2330-2425 (EAYYEVTSVE…LVDKRMVGVV (96 aa)) is Y2. The tract at residues 2330–2610 (EAYYEVTSVE…MVTPFKIIGG (281 aa)) is coV-Y. The segment at 2426–2509 (GDDATIARAM…SCIRLCHQEG (84 aa)) is Y3. Residues 2510-2610 (WEWTTDSWNN…MVTPFKIIGG (101 aa)) are Y4. Helical transmembrane passes span 2621-2641 (LIHV…PWYI), 2719-2739 (VGTT…SVCY), 2865-2885 (AFDL…AVDI), 2887-2907 (TSIL…YYLL), 2916-2936 (YSGV…VLCL), 2946-2966 (IYAM…ACMM), and 2970-2990 (FLIM…IVVV). The interval 2621 to 2990 (LIHVFMLLVV…WVTVLYIVVV (370 aa)) is HD2. The 97-residue stretch at 3007–3103 (VQVGDLAFHS…RCSVASAALQ (97 aa)) folds into the Nsp4C domain. The Peptidase C30 domain occupies 3104–3409 (AGLTRMAHPS…GRQMLGVKLQ (306 aa)). Active-site for 3CL-PRO activity residues include H3144 and C3248. A run of 7 helical transmembrane segments spans residues 3423–3443 (FAII…WTFV), 3449–3469 (TLLL…SLLI), 3474–3494 (TYLT…NFQY), 3517–3537 (VIGT…LLSV), 3569–3589 (VAIS…GVAC), 3592–3612 (LYAA…ILLL), and 3620–3640 (LVCY…FNLI). The HD3 stretch occupies residues 3423 to 3640 (FAIIFVLTIL…TCYFGVFNLI (218 aa)). The RdRp Nsp7 cofactor domain occupies 3700-3782 (SNMTDLKCTS…SILENNSVLQ (83 aa)). Residues 3783–3982 (AVASEFSNLS…QQATSPVKLQ (200 aa)) enclose the RdRp Nsp8 cofactor domain. The Nsp9 ssRNA-binding domain maps to 3983-4094 (NNELMPQTVK…GTLACTVRLH (112 aa)). Residues 4095–4233 (AGSATEVASN…CSSLREINLQ (139 aa)) form the ExoN/MTase coactivator domain. 8 residues coordinate Zn(2+): C4168, C4171, H4177, C4184, C4211, C4214, C4222, and C4224. Zinc fingers lie at residues 4168–4184 (CLYC…SGVC) and 4211–4224 (CAVC…GCPC). Residues 4239 to 4494 (FLNRVRGTSG…AAECHVDGDF (256 aa)) form the NiRAN domain. Residues N4442 and D4451 each coordinate Mn(2+). Positions 4499–4597 (RVWDICKYDY…MNQDIRQHAQ (99 aa)) constitute a Nsp12 Interface domain. Zn(2+) is bound by residues H4528, C4534, C4539, C4543, and C4720. A Nsp12 RNA-dependent RNA polymerase domain is found at 4598–5165 (RLSLRELLVY…NMYMESATLQ (568 aa)). Residues 4600–4814 (SLRELLVYAA…HQKMLKSIAA (215 aa)) are rdRp Fingers N-ter. The segment at 4815 to 4853 (ARGASVVIGTTKFYGGWNRMLRTLCEGVENPHLMGWDYP) is rdRp Palm N-ter. In terms of domain architecture, RdRp catalytic spans 4845 to 5007 (PHLMGWDYPK…CYNADYAQKG (163 aa)). The segment at 4854 to 4912 (KCDRAMPNLLRIFASLILARKHATCCNASERFYRLANECAQVLSEMVLCGGGFYVKPGG) is rdRp Fingers C-ter. Zn(2+)-binding residues include H4875, C4878, and C4879. The segment at 4913-5048 (TSSGDSTTAY…TKGPHEFCSQ (136 aa)) is rdRp Palm C-ter. Residues S4992, D4993, and D4994 contribute to the active site. Residues 5049–5165 (HTMLVDMKGE…NMYMESATLQ (117 aa)) are rdRp Thumb. Residues 5166–5278 (SVGTCVVCNS…ADFNSLATCD (113 aa)) form the CV ZBD domain. 12 residues coordinate Zn(2+): C5170, C5173, C5181, C5184, C5191, C5194, H5198, H5204, C5215, C5220, C5237, and H5240. Positions 5412 to 5603 (TKLVGLYPAM…MVAVGPDIFL (192 aa)) constitute a (+)RNA virus helicase ATP-binding domain. 5447 to 5454 (GPPGTGKS) serves as a coordination point for ATP. The (+)RNA virus helicase C-terminal domain maps to 5604-5778 (ATCYRCPKEI…VTVGLFKDCA (175 aa)). One can recognise an ExoN domain in the interval 5838-6056 (LFITREQAIR…RCLAIHDCFC (219 aa)). Residues D5856, E5858, and E5957 contribute to the active site. Zn(2+)-binding residues include C5973, C5976, C5992, H5995, H6026, C6030, and H6033. Residues H6037 and D6042 contribute to the active site. C6048 is a Zn(2+) binding site. The N7-MTase domain maps to 6065–6296 (YPIIANELAI…NLWSTFVKLQ (232 aa)). Residue 6100–6106 (DIGNPKA) participates in S-adenosyl-L-methionine binding. The interval 6180–6194 (CNGGSLYVNQHAFHT) is gpppA-binding. 4 residues coordinate Zn(2+): C6218, C6242, C6253, and H6256. The Nsp15 N-terminal oligomerization domain occupies 6297-6357 (SLENVAYNVL…NVAFELWAKR (61 aa)). The region spanning 6358 to 6476 (SVNVVPEVKL…YAMRKDGAFV (119 aa)) is the AV-Nsp11N/CoV-Nsp15M domain. The NendoU domain maps to 6493-6630 (QPRTQLEIDF…KGGKISTFYP (138 aa)). Residues H6523, H6537, K6576, K6679, D6763, K6803, and E6836 contribute to the active site. One can recognise a Nidovirus-type SAM-dependent 2'-O-MTase domain in the interval 6635–6928 (KQDWKPGYSM…DIGVRGVACS (294 aa)).

The protein belongs to the coronaviruses polyprotein 1ab family. As to quaternary structure, interacts with host PHB and PHB2. In terms of assembly, interacts with papain-like protease nsp3 and non-structural protein 6. Monomer. Homodimer. Only the homodimer shows catalytic activity. As to quaternary structure, interacts with nsp8 and nsp12 to form the replication-transcription complex (RTC): nsp12, nsp7, two subunits of nsp8, and up to two subunits of nsp13. In terms of assembly, interacts with nsp7, nsp13 and nsp12 to form the replication-transcription complex (RTC): nsp12, nsp7, two subunits of nsp8, and up to two subunits of nsp13. Interacts with nsp12. As to quaternary structure, interacts with proofreading exoribonuclease nsp14 and 2'-O-methyltransferase nsp16; these interactions enhance nsp14 and nsp16 enzymatic activities. In terms of assembly, interacts with nsp7 and nsp8 to form the replication-transcription complex (RTC): nsp12, nsp7, two subunits of nsp8, and up to two subunits of nsp13. Interacts with nsp9. Interacts with nsp8 to form the replication-transcription complex (RTC): nsp12, nsp7, two subunits of nsp8, and up to two subunits of nsp13. The cofactor is Mn(2+). Mg(2+) is required as a cofactor. Post-translationally, specific enzymatic cleavages in vivo by its own proteases yield mature proteins. 3CL-PRO and PL-PRO proteinases are autocatalytically processed.

The protein localises to the host membrane. It localises to the host cytoplasm. The protein resides in the host perinuclear region. It is found in the host endoplasmic reticulum-Golgi intermediate compartment. The enzyme catalyses RNA(n) + a ribonucleoside 5'-triphosphate = RNA(n+1) + diphosphate. The catalysed reaction is ATP + H2O = ADP + phosphate + H(+). It carries out the reaction Thiol-dependent hydrolysis of ester, thioester, amide, peptide and isopeptide bonds formed by the C-terminal Gly of ubiquitin (a 76-residue protein attached to proteins as an intracellular targeting signal).. It catalyses the reaction a 5'-end (N(7)-methyl 5'-triphosphoguanosine)-ribonucleoside in mRNA + S-adenosyl-L-methionine = a 5'-end (N(7)-methyl 5'-triphosphoguanosine)-(2'-O-methyl-ribonucleoside) in mRNA + S-adenosyl-L-homocysteine + H(+). The enzyme catalyses uridylyl-uridylyl-ribonucleotide-RNA = a 3'-end uridylyl-2',3'-cyclophospho-uridine-RNA + a 5'-end dephospho-ribonucleoside-RNA. The catalysed reaction is a 5'-end diphospho-ribonucleoside in mRNA + GTP + H(+) = a 5'-end (5'-triphosphoguanosine)-ribonucleoside in mRNA + diphosphate. It carries out the reaction a 5'-end (5'-triphosphoguanosine)-ribonucleoside in mRNA + S-adenosyl-L-methionine = a 5'-end (N(7)-methyl 5'-triphosphoguanosine)-ribonucleoside in mRNA + S-adenosyl-L-homocysteine. Functionally, the replicase polyprotein of coronaviruses is a multifunctional protein: it contains the activities necessary for the transcription of negative stranded RNA, leader RNA, subgenomic mRNAs and progeny virion RNA as well as proteinases responsible for the cleavage of the polyprotein into functional products. Inhibits host translation by interacting with the 40S ribosomal subunit. The nsp1-40S ribosome complex further induces an endonucleolytic cleavage near the 5'UTR of host mRNAs, targeting them for degradation. Viral mRNAs are not susceptible to nsp1-mediated endonucleolytic RNA cleavage thanks to the presence of a 5'-end leader sequence and are therefore protected from degradation. By suppressing host gene expression, nsp1 facilitates efficient viral gene expression in infected cells and evasion from host immune response. In terms of biological role, may play a role in the modulation of host cell survival signaling pathway by interacting with host PHB and PHB2. Indeed, these two proteins play a role in maintaining the functional integrity of the mitochondria and protecting cells from various stresses. Its function is as follows. Responsible for the cleavages located at the N-terminus of the replicase polyprotein. In addition, PL-PRO possesses a deubiquitinating/deISGylating activity and processes both 'Lys-48'- and 'Lys-63'-linked polyubiquitin chains from cellular substrates. Participates together with nsp4 in the assembly of virally-induced cytoplasmic double-membrane vesicles necessary for viral replication. Antagonizes innate immune induction of type I interferon by blocking the phosphorylation, dimerization and subsequent nuclear translocation of host IRF3. Also prevents host NF-kappa-B signaling. Functionally, participates in the assembly of virally-induced cytoplasmic double-membrane vesicles necessary for viral replication. Cleaves the C-terminus of replicase polyprotein at 11 sites. Recognizes substrates containing the core sequence [ILMVF]-Q-|-[SGACN]. Also able to bind an ADP-ribose-1''-phosphate (ADRP). In terms of biological role, plays a role in the initial induction of autophagosomes from host endoplasmic reticulum. Later, limits the expansion of these phagosomes that are no longer able to deliver viral components to lysosomes. Its function is as follows. Forms a hexadecamer with nsp8 (8 subunits of each) that may participate in viral replication by acting as a primase. Alternatively, may synthesize substantially longer products than oligonucleotide primers. Functionally, forms a hexadecamer with nsp7 (8 subunits of each) that may participate in viral replication by acting as a primase. Alternatively, may synthesize substantially longer products than oligonucleotide primers. Forms a primer, NSP9-pU, which is utilized by the polymerase for the initiation of RNA chains. Interacts with ribosome signal recognition particle RNA (SRP). Together with NSP8, suppress protein integration into the cell membrane, thereby disrupting host immune defenses. In terms of biological role, plays a pivotal role in viral transcription by stimulating both nsp14 3'-5' exoribonuclease and nsp16 2'-O-methyltransferase activities. Therefore plays an essential role in viral mRNAs cap methylation. Its function is as follows. RNA-directed RNA polymerase that catalyzes the transcription of viral genomic and subgenomic RNAs. Acts in complex with nsp7 and nsp8 to transcribe both the minus and positive strands of genomic RNA. The kinase-like NiRAN domain of NSP12 attaches one or more nucleotides to the amino terminus of NSP9, forming a covalent RNA-protein intermediate that serves as transcription/replication primer. Subgenomic RNAs (sgRNAs) are formed by discontinuous transcription: The polymerase has the ability to pause at transcription-regulating sequences (TRS) and jump to the leader TRS, resulting in a major deletion. This creates a series of subgenomic RNAs that are replicated, transcribed and translated. In addition, Nsp12 is a subunit of the viral RNA capping enzyme that catalyzes the RNA guanylyltransferase reaction for genomic and sub-genomic RNAs. Subsequently, the NiRAN domain transfers RNA to GDP, and forms the core cap structure GpppA-RNA. Functionally, multi-functional protein with a zinc-binding domain in N-terminus displaying RNA and DNA duplex-unwinding activities with 5' to 3' polarity. Activity of helicase is dependent on magnesium. Plays a role in viral RNA synthesis through two distinct activities. The N7-guanine methyltransferase activity plays a role in the formation of the cap structure GpppA-RNA. The proofreading exoribonuclease reduces the sensitivity of the virus to RNA mutagens during replication. This activity acts on both ssRNA and dsRNA in a 3'-5' direction. In terms of biological role, plays a role in viral transcription/replication and prevents the simultaneous activation of host cell dsRNA sensors, such as MDA5/IFIH1, OAS, and PKR. Acts by degrading the 5'-polyuridines generated during replication of the poly(A) region of viral genomic and subgenomic RNAs. Catalyzes a two-step reaction in which a 2'3'-cyclic phosphate (2'3'-cP) is first generated by 2'-O transesterification, which is then hydrolyzed to a 3'-phosphate (3'-P). If not degraded, poly(U) RNA would hybridize with poly(A) RNA tails and activate host dsRNA sensors. Its function is as follows. Methyltransferase that mediates mRNA cap 2'-O-ribose methylation to the 5'-cap structure of viral mRNAs. N7-methyl guanosine cap is a prerequisite for binding of nsp16. Therefore plays an essential role in viral mRNAs cap methylation which is essential to evade immune system. The sequence is that of Replicase polyprotein 1ab (rep) from Bat coronavirus HKU9 (BtCoV).